A 715-amino-acid polypeptide reads, in one-letter code: Fatty acid oxidation complex subunit alpha (715 aa).

Residues 1–190 are enoyl-CoA hydratase/isomerase; the sequence is MIYQGKAITV…KVGAVDAVVA (190 aa). Asp297 contacts substrate. The segment at 312–715 is 3-hydroxyacyl-CoA dehydrogenase; the sequence is KDVKLAAVLG…MAKNGQKFFG (404 aa). NAD(+) contacts are provided by residues Met325, Asp344, 401–403, Lys408, and Ser430; that span reads VVE. His451 functions as the For 3-hydroxyacyl-CoA dehydrogenase activity in the catalytic mechanism. NAD(+) is bound at residue Asn454. Substrate is bound by residues Asn501 and Tyr660.

In the N-terminal section; belongs to the enoyl-CoA hydratase/isomerase family. It in the C-terminal section; belongs to the 3-hydroxyacyl-CoA dehydrogenase family. In terms of assembly, heterotetramer of two alpha chains (FadB) and two beta chains (FadA).

It catalyses the reaction a (3S)-3-hydroxyacyl-CoA + NAD(+) = a 3-oxoacyl-CoA + NADH + H(+). The enzyme catalyses a (3S)-3-hydroxyacyl-CoA = a (2E)-enoyl-CoA + H2O. The catalysed reaction is a 4-saturated-(3S)-3-hydroxyacyl-CoA = a (3E)-enoyl-CoA + H2O. It carries out the reaction (3S)-3-hydroxybutanoyl-CoA = (3R)-3-hydroxybutanoyl-CoA. It catalyses the reaction a (3Z)-enoyl-CoA = a 4-saturated (2E)-enoyl-CoA. The enzyme catalyses a (3E)-enoyl-CoA = a 4-saturated (2E)-enoyl-CoA. It participates in lipid metabolism; fatty acid beta-oxidation. Functionally, involved in the aerobic and anaerobic degradation of long-chain fatty acids via beta-oxidation cycle. Catalyzes the formation of 3-oxoacyl-CoA from enoyl-CoA via L-3-hydroxyacyl-CoA. It can also use D-3-hydroxyacyl-CoA and cis-3-enoyl-CoA as substrate. This chain is Fatty acid oxidation complex subunit alpha, found in Pseudomonas aeruginosa (strain LESB58).